Here is a 104-residue protein sequence, read N- to C-terminus: Small ribosomal subunit protein bS16 (104 aa).

Belongs to the bacterial ribosomal protein bS16 family.

The polypeptide is Small ribosomal subunit protein bS16 (Gemmatimonas aurantiaca (strain DSM 14586 / JCM 11422 / NBRC 100505 / T-27)).